Here is a 67-residue protein sequence, read N- to C-terminus: Conotoxin Cl6.10 (67 aa).

An N-terminal signal peptide occupies residues 1-24; it reads MKLTCVLIAAVLLLAVCQLDSADA. The propeptide occupies 25 to 37; sequence TAYMRKDPSLRSP. Intrachain disulfides connect C43–C57, C50–C61, and C56–C65.

This sequence belongs to the conotoxin O1 superfamily. As to expression, expressed by the venom duct.

The protein resides in the secreted. The polypeptide is Conotoxin Cl6.10 (Californiconus californicus (California cone)).